We begin with the raw amino-acid sequence, 416 residues long: Serine/threonine-protein kinase 26 (416 aa).

N-acetylalanine is present on alanine 2. Position 4 is a phosphoserine (serine 4). Residues 24–274 (FTKLERIGKG…AKELLKHKFI (251 aa)) enclose the Protein kinase domain. ATP-binding positions include 30 to 38 (IGKGSFGEV) and lysine 53. Residue aspartate 144 is the Proton acceptor of the active site. Position 178 is a phosphothreonine; by autocatalysis (threonine 178). Residues 296–343 (AEGHSDEESDSEGSDSESSSRESNPHPEWSFTTVRKKPDPKKLQNGEE) form a disordered region. Phosphoserine occurs at positions 300, 304, 306, 309, and 325. Threonine 327 and threonine 328 each carry phosphothreonine. The span at 331–340 (KKPDPKKLQN) shows a compositional bias: basic and acidic residues.

It belongs to the protein kinase superfamily. STE Ser/Thr protein kinase family. STE20 subfamily. In terms of assembly, homodimer. Interacts with PDCD10. Interacts with GOLGA2. Interacts with CTTNBP2NL. Interacts with RIPOR1 (via C-terminus); this interaction occurs in a PDCD10-dependent and Rho-independent manner. Interacts with PDCD10; this interaction is required for the association of STK26 with RIPOR1. Part of the core of STRIPAK complexes composed of PP2A catalytic and scaffolding subunits, the striatins (PP2A regulatory subunits), the striatin-associated proteins MOB4, STRIP1 and STRIP2, PDCD10 and members of the STE20 kinases, such as STK24 and STK26. Mg(2+) serves as cofactor.

It is found in the cytoplasm. The protein resides in the golgi apparatus. It carries out the reaction L-seryl-[protein] + ATP = O-phospho-L-seryl-[protein] + ADP + H(+). It catalyses the reaction L-threonyl-[protein] + ATP = O-phospho-L-threonyl-[protein] + ADP + H(+). With respect to regulation, interaction with Golgi matrix protein GOLGA2 leads to autophosphorylation on Thr-178, possibly as a consequence of stabilization of dimer formation. May also be activated by C-terminal cleavage. Its function is as follows. Serine/threonine-protein kinase that acts as a mediator of cell growth. Modulates apoptosis. In association with STK24 negatively regulates Golgi reorientation in polarized cell migration upon RHO activation. Phosphorylates ATG4B at 'Ser-383', thereby increasing autophagic flux. Part of the striatin-interacting phosphatase and kinase (STRIPAK) complexes. STRIPAK complexes have critical roles in protein (de)phosphorylation and are regulators of multiple signaling pathways including Hippo, MAPK, nuclear receptor and cytoskeleton remodeling. Different types of STRIPAK complexes are involved in a variety of biological processes such as cell growth, differentiation, apoptosis, metabolism and immune regulation. In Mus musculus (Mouse), this protein is Serine/threonine-protein kinase 26.